The chain runs to 583 residues: MGDWGLTETSMDNYEISILSHVAMSPSRHNNLMSAYSLPSSKSSYSVISAFCTEDNIPQCISYINQELGSLGLAAHIQADPPGRASLNAAPALNAMYELLQIHRRSMNNVEELEKEQLKKTSTLEHMQTSNSRLKDQLELSIREKSGLHETERQLQLKLKTLQSCLKTEKDEVQKLQSIIASRASQYSHDAKRKEREAAKLKERLSQLLVDRKDKKLAIEMLNSVGRSDGKRSHWKTAKATASREAEMYKSLLSDYEASQRALMLENAELQKVLQQMKKEMMHILSPCPPLNRGGSAEESQELGDSDREERSAETSRETLDQSCEHAREQLTNSIRQQWRKLRNHVQKLDNQASLVQNQPPSNAEVIPLETHEHEVERMRLEVQQCKEFIHAQQQLLQQQLNTSFDDETAALLNGCYTLEEKERLKEEWRLFDEQKRNFEKERKNFTEAAIRLGREKRAFEEDRAAWLKHQFLSMTPFADRMRSSSSDGQSALSVKSEPEIRTSSSKAPPVKSSAYTTFSTPKSSKSAAVPSTIDVCRTLRLIPDYRESSATEDEESWLKSKSKVCSSDLSIFSLDEDKNPLT.

3 coiled-coil regions span residues 108–220 (NNVE…LAIE), 255–333 (DYEA…QLTN), and 420–453 (EEKERLKEEWRLFDEQKRNFEKERKNFTEAAIRL). The tract at residues 285–328 (LSPCPPLNRGGSAEESQELGDSDREERSAETSRETLDQSCEHAR) is disordered. Over residues 305 to 328 (DSDREERSAETSRETLDQSCEHAR) the composition is skewed to basic and acidic residues. The disordered stretch occupies residues 480 to 527 (DRMRSSSSDGQSALSVKSEPEIRTSSSKAPPVKSSAYTTFSTPKSSKS). Residues 484–494 (SSSSDGQSALS) show a composition bias toward polar residues. Low complexity predominate over residues 504–515 (SSSKAPPVKSSA). Polar residues predominate over residues 516–527 (YTTFSTPKSSKS).

Belongs to the ADIP family.

The protein localises to the cell junction. The protein resides in the adherens junction. Its subcellular location is the cytoplasm. It is found in the cytoskeleton. It localises to the microtubule organizing center. The protein localises to the centrosome. The protein resides in the centriolar satellite. Belongs to an adhesion system, which plays a role in the organization of homotypic, interneuronal and heterotypic cell-cell adherens junctions (AJs). Involved in cell movement. Acts as a centrosome maturation factor, probably by maintaining the integrity of the pericentriolar material and proper microtubule nucleation at mitotic spindle poles. The protein is Afadin- and alpha-actinin-binding protein (ssx2ip) of Oryzias latipes (Japanese rice fish).